The following is a 99-amino-acid chain: Putative septation protein SpoVG (99 aa).

Belongs to the SpoVG family.

Could be involved in septation. The chain is Putative septation protein SpoVG from Exiguobacterium sp. (strain ATCC BAA-1283 / AT1b).